The primary structure comprises 478 residues: MIQVLLVTICLAAFPYQGSSIILESGNVNDYEIVYPRKVTALPKGAVQPKYEDTMQYELKVNGEPVVLHLEKNKGLFSKDYSETHYSPDGRKITTNPPVEDHCYYHGRIQNDADSTASISACNGLKGHFKLQGEMYLIEPLKLSDSEAHAVFKYEHIEKEDEDPKMCGVTETNWESYEPIKKASPLVVTTYQRYVELVVVADHRMVTKYNGNLIIIRTWVYEIFNTINEIYQRMNIHVALVGLEIWSNGDKIIVQSSADVTLDLFGTWGEIDLLKRKSHDNAQLLTPTDFDGPTIGLAYVGTMCDPKRSTGVVQDFSPINLLVAVTMAHEIGHNLGMNHDENYCSCGGFACIMSPVISPQPSKLFSYCSYIHYWTYINYRNPQCILNKPLRTDIVSTPVSGNELLEAGEECDCDSPGNPCCDAATCKLRPGAQCAEGLCCEQCRFMKEGTVCRIARGDDMDDYCNGISAGCPRNPFHA.

An N-terminal signal peptide occupies residues 1–20; the sequence is MIQVLLVTICLAAFPYQGSS. Residues 21 to 190 constitute a propeptide that is removed on maturation; sequence IILESGNVND…KKASPLVVTT (170 aa). The Peptidase M12B domain maps to 193–389; the sequence is RYVELVVVAD…RNPQCILNKP (197 aa). Ca(2+)-binding residues include Glu-196 and Asp-280. Intrachain disulfides connect Cys-304–Cys-384, Cys-344–Cys-368, and Cys-346–Cys-351. Position 329 (His-329) interacts with Zn(2+). The active site involves Glu-330. Residues His-333 and His-339 each coordinate Zn(2+). Ca(2+) is bound by residues Cys-384 and Asn-387. A propeptide spanning residues 390–413 is cleaved from the precursor; that stretch reads LRTDIVSTPVSGNELLEAGEECDC. The Disintegrin domain occupies 397 to 478; sequence TPVSGNELLE…AGCPRNPFHA (82 aa). Intrachain disulfides connect Cys-411–Cys-426, Cys-413–Cys-421, Cys-420–Cys-443, Cys-434–Cys-440, Cys-439–Cys-464, and Cys-452–Cys-471. Residues 456 to 458 carry the Cell attachment site motif; the sequence is RGD.

It belongs to the venom metalloproteinase (M12B) family. P-II subfamily. P-IIa sub-subfamily. In terms of assembly, monomer. Zn(2+) serves as cofactor. Expressed by the venom gland.

The protein resides in the secreted. Its function is as follows. Impairs hemostasis in the envenomed animal. Functionally, inhibits platelet aggregation induced by ADP, thrombin, platelet-activating factor and collagen. Acts by inhibiting fibrinogen interaction with platelet receptors GPIIb/GPIIIa (ITGA2B/ITGB3). This chain is Zinc metalloproteinase/disintegrin ussurin, found in Gloydius ussuriensis (Ussuri mamushi).